A 132-amino-acid chain; its full sequence is Glycine cleavage system H protein (132 aa).

The Lipoyl-binding domain occupies 24–106 (RVRVGITDYA…YGAGWLFELE (83 aa)). Residue lysine 65 is modified to N6-lipoyllysine.

The protein belongs to the GcvH family. The glycine cleavage system is composed of four proteins: P, T, L and H. (R)-lipoate is required as a cofactor.

Functionally, the glycine cleavage system catalyzes the degradation of glycine. The H protein shuttles the methylamine group of glycine from the P protein to the T protein. This chain is Glycine cleavage system H protein, found in Nocardia farcinica (strain IFM 10152).